We begin with the raw amino-acid sequence, 499 residues long: Inosine-5'-monophosphate dehydrogenase (499 aa).

2 consecutive CBS domains span residues 106-165 (IDRE…SDAV) and 169-225 (MTDE…GSAA). NAD(+) contacts are provided by residues Asp-260 and 308–310 (GIG). Residues Gly-310 and Gly-312 each coordinate K(+). Position 313 (Ser-313) interacts with IMP. Cys-315 serves as a coordination point for K(+). Cys-315 acts as the Thioimidate intermediate in catalysis. Residues 348-350 (DGG), 371-372 (GS), and 395-399 (YRGMG) each bind IMP. Arg-411 acts as the Proton acceptor in catalysis. IMP is bound at residue Glu-425. 3 residues coordinate K(+): Glu-479, Gly-480, and His-481. The interval 480–499 (GHPHDVMITDEAPNYSPQGE) is disordered.

The protein belongs to the IMPDH/GMPR family. In terms of assembly, homotetramer. The cofactor is K(+).

The catalysed reaction is IMP + NAD(+) + H2O = XMP + NADH + H(+). Its pathway is purine metabolism; XMP biosynthesis via de novo pathway; XMP from IMP: step 1/1. Its activity is regulated as follows. Mycophenolic acid (MPA) is a non-competitive inhibitor that prevents formation of the closed enzyme conformation by binding to the same site as the amobile flap. In contrast, mizoribine monophosphate (MZP) is a competitive inhibitor that induces the closed conformation. MPA is a potent inhibitor of mammalian IMPDHs but a poor inhibitor of the bacterial enzymes. MZP is a more potent inhibitor of bacterial IMPDH. Catalyzes the conversion of inosine 5'-phosphate (IMP) to xanthosine 5'-phosphate (XMP), the first committed and rate-limiting step in the de novo synthesis of guanine nucleotides, and therefore plays an important role in the regulation of cell growth. The chain is Inosine-5'-monophosphate dehydrogenase from Halobacterium salinarum (strain ATCC 700922 / JCM 11081 / NRC-1) (Halobacterium halobium).